Here is a 270-residue protein sequence, read N- to C-terminus: Regulatory protein RecX (270 aa).

Belongs to the RecX family.

It localises to the cytoplasm. In terms of biological role, modulates RecA activity. The polypeptide is Regulatory protein RecX (Bacillus thuringiensis subsp. konkukian (strain 97-27)).